Reading from the N-terminus, the 144-residue chain is Putative pre-16S rRNA nuclease (144 aa).

Belongs to the YqgF nuclease family.

Its subcellular location is the cytoplasm. Its function is as follows. Could be a nuclease involved in processing of the 5'-end of pre-16S rRNA. In Oenococcus oeni (strain ATCC BAA-331 / PSU-1), this protein is Putative pre-16S rRNA nuclease.